Consider the following 407-residue polypeptide: MSSTRVLVLNSGSSSVKYQLIDMRDGERLAAGLVERIGERTSRLRHTLVAAGDTREQEGPIADHEAALKAVAAELGRDGLGLDSPELAAIGHRVVHGGEFFSEPTLIDENVLTEIERLIPVAPLHNPANLTGIRTAQALRPDLPQVAVFDTAFHTTMPESAARYAIDPKIADRYRIRRYGFHGTSHAYVSRETARLLGRAPGDVNVIVLHLGNGASASAVRGGRCVDTSMGLTPLEGLVMGTRSGDMDPAVIFHLMRVGGMSADEIDTLLNKRSGLFGLCGDNDMREIRRRVDEDDEQAGLAFDIYIHRLKKYIGAYYAVLGRVDAVAFTAGVGENSAPVREAAVAGLEGLGLAVDGGLNAVRGDGARLISPAGARVAVAVVPTDEEMEIATQTYALVSESGNPDLT.

Asn10 serves as a coordination point for Mg(2+). Lys17 lines the ATP pocket. Arg93 is a substrate binding site. Asp150 (proton donor/acceptor) is an active-site residue. ATP-binding positions include His210–Gly214, Asp284–Arg286, and Gly332–Asn336. Glu386 contacts Mg(2+).

Belongs to the acetokinase family. As to quaternary structure, homodimer. Mg(2+) is required as a cofactor. Mn(2+) serves as cofactor.

The protein localises to the cytoplasm. The catalysed reaction is acetate + ATP = acetyl phosphate + ADP. The protein operates within metabolic intermediate biosynthesis; acetyl-CoA biosynthesis; acetyl-CoA from acetate: step 1/2. Functionally, catalyzes the formation of acetyl phosphate from acetate and ATP. Can also catalyze the reverse reaction. In Streptomyces coelicolor (strain ATCC BAA-471 / A3(2) / M145), this protein is Acetate kinase.